The primary structure comprises 666 residues: Probable potassium transport system protein Kup (666 aa).

Transmembrane regions (helical) follow at residues 16–36 (GFIIALGIVYGDIGTSPLYTM), 58–78 (ISLIIWTLTLITTIKYVLIAL), 100–120 (PWLIIPAMIGGATLLSDGALT), 141–161 (IYQNQTNIIITTLVILIVLFG), 165–185 (FGTGFIGKIFGPVMFIWFSFL), 221–241 (IFILGSIFLATTGAEALYSDL), 253–273 (WPFVKMCIVWSYCGQAAWILA), 294–314 (VYLVSLATLAAIIASQALISG), 343–363 (LYIPVINWILFAVTSCTVLAF), 373–393 (YGLAITITMLMTTILLKYYLI), 399–419 (PILAHLAMAFFALVEFIFFLA), and 424–444 (FMHGGYAVVILALAIVFVMFI).

This sequence belongs to the HAK/KUP transporter (TC 2.A.72) family.

The protein localises to the cell membrane. It carries out the reaction K(+)(in) + H(+)(in) = K(+)(out) + H(+)(out). Transport of potassium into the cell. Likely operates as a K(+):H(+) symporter. The chain is Probable potassium transport system protein Kup from Streptococcus pyogenes serotype M4 (strain MGAS10750).